Reading from the N-terminus, the 126-residue chain is Small ribosomal subunit protein uS13 (126 aa).

Residues 92-126 (HRMGLPVRGQRTRTNARTRRGRRQTVAGKKKAPGK) form a disordered region. A compositionally biased stretch (basic residues) spans 101–126 (QRTRTNARTRRGRRQTVAGKKKAPGK).

The protein belongs to the universal ribosomal protein uS13 family. Part of the 30S ribosomal subunit. Forms a loose heterodimer with protein S19. Forms two bridges to the 50S subunit in the 70S ribosome.

Its function is as follows. Located at the top of the head of the 30S subunit, it contacts several helices of the 16S rRNA. In the 70S ribosome it contacts the 23S rRNA (bridge B1a) and protein L5 of the 50S subunit (bridge B1b), connecting the 2 subunits; these bridges are implicated in subunit movement. Contacts the tRNAs in the A and P-sites. In Nostoc punctiforme (strain ATCC 29133 / PCC 73102), this protein is Small ribosomal subunit protein uS13.